The chain runs to 361 residues: MTAPRKPAAFRIEPEAAPTQETPKARQAELSRKPRGLKTDVALVIPAEVDVFDEPDIVAAEPPPAAAPRKRSLFGSIFFGAIGVLVSLAVGLWTDQLIRDLFARAEWLGWLAAGMAAIAVLALVVILIREFLAIARLAEVEKLQKRALDAIARDDPKAARSVVDELSAFVAAKPETAAGRRALAELRGEIIDGGNLVRLAEAEILGPLDARAKVMILEAAKRVSLVTAVSPRALVDVAYVVFEAGRLIRRLSELYGGRPGTLGFFRLARSVLAHLAVTGSIAVGDSFVQQIVGHGLAARLSAKLGEGVVNGMMTARIGIAAMETARPLPFSAAKRPGLGDFLSALTSFAAKKDTETTGSGK.

The interval 1 to 33 is disordered; that stretch reads MTAPRKPAAFRIEPEAAPTQETPKARQAELSRK. Over residues 23-32 the composition is skewed to basic and acidic residues; that stretch reads PKARQAELSR. The next 2 helical transmembrane spans lie at 73–93 and 108–128; these read LFGSIFFGAIGVLVSLAVGLW and LGWLAAGMAAIAVLALVVILI.

This sequence belongs to the UPF0283 family.

The protein resides in the cell inner membrane. The polypeptide is UPF0283 membrane protein mlr0776 (Mesorhizobium japonicum (strain LMG 29417 / CECT 9101 / MAFF 303099) (Mesorhizobium loti (strain MAFF 303099))).